Reading from the N-terminus, the 137-residue chain is Large ribosomal subunit protein uL16 (137 aa).

Residues 1-17 (MLQPKRTKFRKTHKGRN) are compositionally biased toward basic residues. Residues 1–24 (MLQPKRTKFRKTHKGRNRGLANTG) are disordered.

It belongs to the universal ribosomal protein uL16 family. In terms of assembly, part of the 50S ribosomal subunit.

Functionally, binds 23S rRNA and is also seen to make contacts with the A and possibly P site tRNAs. The chain is Large ribosomal subunit protein uL16 from Aeromonas salmonicida (strain A449).